Here is a 341-residue protein sequence, read N- to C-terminus: 5-formaminoimidazole-4-carboxamide-1-(beta)-D-ribofuranosyl 5'-monophosphate synthetase (341 aa).

Residues His-10 and Thr-77 each coordinate 5-amino-1-(5-phospho-beta-D-ribosyl)imidazole-4-carboxamide. Positions 106–317 constitute an ATP-grasp domain; it reads DRSLKERLMR…YYGLLFDEPI (212 aa). ATP-binding positions include 132-188 and Glu-210; that span reads DTLV…VLAY. Position 238 (Asn-238) interacts with 5-amino-1-(5-phospho-beta-D-ribosyl)imidazole-4-carboxamide. Positions 277 and 290 each coordinate Mg(2+).

This sequence belongs to the phosphohexose mutase family. Mg(2+) serves as cofactor. Requires Mn(2+) as cofactor.

The catalysed reaction is 5-amino-1-(5-phospho-beta-D-ribosyl)imidazole-4-carboxamide + formate + ATP = 5-formamido-1-(5-phospho-D-ribosyl)imidazole-4-carboxamide + ADP + phosphate. Its pathway is purine metabolism; IMP biosynthesis via de novo pathway; 5-formamido-1-(5-phospho-D-ribosyl)imidazole-4-carboxamide from 5-amino-1-(5-phospho-D-ribosyl)imidazole-4-carboxamide (formate route): step 1/1. Catalyzes the ATP- and formate-dependent formylation of 5-aminoimidazole-4-carboxamide-1-beta-d-ribofuranosyl 5'-monophosphate (AICAR) to 5-formaminoimidazole-4-carboxamide-1-beta-d-ribofuranosyl 5'-monophosphate (FAICAR) in the absence of folates. In Cenarchaeum symbiosum (strain A), this protein is 5-formaminoimidazole-4-carboxamide-1-(beta)-D-ribofuranosyl 5'-monophosphate synthetase.